The following is a 387-amino-acid chain: Low specificity L-threonine aldolase (387 aa).

K213 carries the N6-(pyridoxal phosphate)lysine modification. A Glycyl lysine isopeptide (Lys-Gly) (interchain with G-Cter in ubiquitin) cross-link involves residue K228. Phosphoserine is present on residues S367 and S369. At T370 the chain carries Phosphothreonine.

It belongs to the threonine aldolase family. As to quaternary structure, homotetramer. Pyridoxal 5'-phosphate serves as cofactor.

The catalysed reaction is L-threonine = acetaldehyde + glycine. The enzyme catalyses L-allo-threonine = acetaldehyde + glycine. It functions in the pathway amino-acid biosynthesis; glycine biosynthesis; glycine from L-allo-threonine: step 1/1. The protein operates within amino-acid degradation; L-threonine degradation via aldolase pathway; acetaldehyde and glycine from L-threonine: step 1/1. In terms of biological role, catalyzes the cleavage of L-allo-threonine and L-threonine to glycine and acetaldehyde. The chain is Low specificity L-threonine aldolase (GLY1) from Saccharomyces cerevisiae (strain ATCC 204508 / S288c) (Baker's yeast).